The primary structure comprises 207 residues: ADP-ribose pyrophosphatase (207 aa).

Residues 37 to 38 and Arg-64 contribute to the substrate site; that span reads RE. The Nudix hydrolase domain occupies 41–172; it reads EHFGAVAIVA…EIVNSIAIAG (132 aa). Ala-76 provides a ligand contact to Mg(2+). Positions 77–99 match the Nudix box motif; it reads GLLDVAGEPPHLTAARELREEVG. Position 78 (Leu-78) interacts with substrate. 2 residues coordinate Mg(2+): Glu-93 and Glu-97. Residues 114–116 and Glu-120 each bind substrate; that span reads APG. A Mg(2+)-binding site is contributed by Glu-142. The Proton acceptor role is filled by Glu-142.

Belongs to the Nudix hydrolase family. As to quaternary structure, homodimer. Mg(2+) serves as cofactor. Requires Mn(2+) as cofactor.

The catalysed reaction is ADP-D-ribose + H2O = D-ribose 5-phosphate + AMP + 2 H(+). It catalyses the reaction 8-oxo-dGDP + H2O = 8-oxo-dGMP + phosphate + H(+). It carries out the reaction 8-oxo-GDP + H2O = 8-oxo-GMP + phosphate + H(+). Catalyzes the hydrolysis of ADP-ribose (ADPR) to AMP and ribose-5-phosphate. Can also hydrolyze ADP-mannose and ADP-glucose, with lower efficiency. Has weaker activity with NAD, GDP-sugars and UDP-sugars. Also catalyzes the conversion of 8-oxo-dGDP to 8-oxo-dGMP, and 8-oxo-GDP to 8-oxo-GMP. Functions in concert with MutT1 to detoxify 8-oxo-dGTP to 8-oxo-dGMP and may play an important role in supporting cellular growth under oxidative stress. The catalytic efficiency is much higher for the hydrolysis of ADPR than 8-oxo-dGTP, suggesting a more relevant biological role in hydrolysis of ADPR. This is ADP-ribose pyrophosphatase from Mycobacterium tuberculosis (strain ATCC 25618 / H37Rv).